The following is a 426-amino-acid chain: Serine--tRNA ligase (426 aa).

Position 230-232 (230-232) interacts with L-serine; it reads TAE. Residue 261–263 coordinates ATP; the sequence is RSE. Residue glutamate 284 coordinates L-serine. 348-351 provides a ligand contact to ATP; it reads EISS. An L-serine-binding site is contributed by serine 384.

This sequence belongs to the class-II aminoacyl-tRNA synthetase family. Type-1 seryl-tRNA synthetase subfamily. In terms of assembly, homodimer. The tRNA molecule binds across the dimer.

Its subcellular location is the cytoplasm. It carries out the reaction tRNA(Ser) + L-serine + ATP = L-seryl-tRNA(Ser) + AMP + diphosphate + H(+). It catalyses the reaction tRNA(Sec) + L-serine + ATP = L-seryl-tRNA(Sec) + AMP + diphosphate + H(+). It participates in aminoacyl-tRNA biosynthesis; selenocysteinyl-tRNA(Sec) biosynthesis; L-seryl-tRNA(Sec) from L-serine and tRNA(Sec): step 1/1. Its function is as follows. Catalyzes the attachment of serine to tRNA(Ser). Is also able to aminoacylate tRNA(Sec) with serine, to form the misacylated tRNA L-seryl-tRNA(Sec), which will be further converted into selenocysteinyl-tRNA(Sec). This chain is Serine--tRNA ligase, found in Phenylobacterium zucineum (strain HLK1).